A 197-amino-acid chain; its full sequence is MNLGRLCRLLKPALLCGALAAPGLAGTMCASRDDWRCARSMHEFSAKDIDGHMVNLDKYRGFVCIVTNVASQUGKTEVNYTQLVDLHARYAECGVRILAFPCNQFGKQEPGSNEKIKEFAAGYNVKFDMFSKICVNGDDAHPLWKWMKIQPKGKGILGNAIKWNFTKFLIDKNGCVVKRYGPMEEPLVIEKDLPHYF.

S40 is modified (phosphoserine). U73 is an active-site residue. Position 73 (U73) is a non-standard amino acid, selenocysteine.

This sequence belongs to the glutathione peroxidase family. In terms of assembly, monomer. Has a tendency to form higher mass oligomers. Interacts with FUNDC1; this interaction promotes GPX4 recruitment into mitochondria through TOM/TIM complex where it is degraded by mitophagy. In terms of tissue distribution, expressed very intensively in the testis and weakly in lung, heart, and cerebellum.

The protein localises to the mitochondrion. It is found in the cytoplasm. The enzyme catalyses a hydroperoxy polyunsaturated fatty acid + 2 glutathione = a hydroxy polyunsaturated fatty acid + glutathione disulfide + H2O. It carries out the reaction 2 glutathione + H2O2 = glutathione disulfide + 2 H2O. It catalyses the reaction tert-butyl hydroperoxide + 2 glutathione = tert-butanol + glutathione disulfide + H2O. The catalysed reaction is cumene hydroperoxide + 2 glutathione = 2-phenylpropan-2-ol + glutathione disulfide + H2O. The enzyme catalyses (9S)-hydroperoxy-(10E,12Z)-octadecadienoate + 2 glutathione = (9S)-hydroxy-(10E,12Z)-octadecadienoate + glutathione disulfide + H2O. It carries out the reaction (13S)-hydroperoxy-(9Z,11E)-octadecadienoate + 2 glutathione = (13S)-hydroxy-(9Z,11E)-octadecadienoate + glutathione disulfide + H2O. It catalyses the reaction (5S)-hydroperoxy-(6E,8Z,11Z,14Z)-eicosatetraenoate + 2 glutathione = (5S)-hydroxy-(6E,8Z,11Z,14Z)-eicosatetraenoate + glutathione disulfide + H2O. The catalysed reaction is (12R)-hydroperoxy-(5Z,8Z,10E,14Z)-eicosatetraenoate + 2 glutathione = (12R)-hydroxy-(5Z,8Z,10E,14Z)-eicosatetraenoate + glutathione disulfide + H2O. The enzyme catalyses (12S)-hydroperoxy-(5Z,8Z,10E,14Z)-eicosatetraenoate + 2 glutathione = (12S)-hydroxy-(5Z,8Z,10E,14Z)-eicosatetraenoate + glutathione disulfide + H2O. It carries out the reaction (15S)-hydroperoxy-(5Z,8Z,11Z,13E)-eicosatetraenoate + 2 glutathione = (15S)-hydroxy-(5Z,8Z,11Z,13E)-eicosatetraenoate + glutathione disulfide + H2O. It catalyses the reaction (5S)-hydroperoxy-(6E,8Z,11Z,14Z,17Z)-eicosapentaenoate + 2 glutathione = (5S)-hydroxy-(6E,8Z,11Z,14Z,17Z)-eicosapentaenoate + glutathione disulfide + H2O. The catalysed reaction is (12S)-hydroperoxy-(5Z,8Z,10E,14Z,17Z)-eicosapentaenoate + 2 glutathione = (12S)-hydroxy-(5Z,8Z,10E,14Z,17Z)-eicosapentaenoate + glutathione disulfide + H2O. The enzyme catalyses (15S)-hydroperoxy-(5Z,8Z,11Z,13E,17Z)-eicosapentaenoate + 2 glutathione = (15S)-hydroxy-(5Z,8Z,11Z,13E,17Z)-eicosapentaenoate + glutathione disulfide + H2O. It carries out the reaction (15S)-hydroperoxy-(11Z,13E)-eicosadienoate + 2 glutathione = (15S)-hydroxy-(11Z,13E)-eicosadienoate + glutathione disulfide + H2O. It catalyses the reaction (17S)-hydroperoxy-(4Z,7Z,10Z,13Z,15E,19Z)-docosahexaenoate + 2 glutathione = (17S)-hydroxy-(4Z,7Z,10Z,13Z,15E,19Z)-docosahexaenoate + glutathione disulfide + H2O. The catalysed reaction is a hydroperoxy-1,2-diacyl-glycero-3-phosphocholine + 2 glutathione = a hydroxy-1,2-diacyl-glycero-3-phosphocholine + glutathione disulfide + H2O. Functionally, essential antioxidant peroxidase that directly reduces phospholipid hydroperoxide even if they are incorporated in membranes and lipoproteins. Can also reduce fatty acid hydroperoxide, cholesterol hydroperoxide and thymine hydroperoxide. Plays a key role in protecting cells from oxidative damage by preventing membrane lipid peroxidation. Required to prevent cells from ferroptosis, a non-apoptotic cell death resulting from an iron-dependent accumulation of lipid reactive oxygen species. The presence of selenocysteine (Sec) versus Cys at the active site is essential for life: it provides resistance to overoxidation and prevents cells against ferroptosis. The presence of Sec at the active site is also essential for the survival of a specific type of parvalbumin-positive interneurons, thereby preventing against fatal epileptic seizures. May be required to protect cells from the toxicity of ingested lipid hydroperoxides. Required for normal sperm development and male fertility. Essential for maturation and survival of photoreceptor cells. Plays a role in a primary T-cell response to viral and parasitic infection by protecting T-cells from ferroptosis and by supporting T-cell expansion. Plays a role of glutathione peroxidase in platelets in the arachidonic acid metabolism. Reduces hydroperoxy ester lipids formed by a 15-lipoxygenase that may play a role as down-regulator of the cellular 15-lipoxygenase pathway. Can also reduce small soluble hydroperoxides such as H2O2, cumene hydroperoxide and tert-butyl hydroperoxide. This chain is Phospholipid hydroperoxide glutathione peroxidase, found in Macaca fuscata fuscata (Japanese macaque).